The following is a 325-amino-acid chain: Ribonucleoside-diphosphate reductase subunit beta (325 aa).

Residues aspartate 73, glutamate 104, and histidine 107 each contribute to the Fe cation site. Residue tyrosine 111 is part of the active site. Fe cation-binding residues include glutamate 164, glutamate 198, and histidine 201.

It belongs to the ribonucleoside diphosphate reductase small chain family. As to quaternary structure, tetramer of two alpha and two beta subunits. Fe cation serves as cofactor.

It carries out the reaction a 2'-deoxyribonucleoside 5'-diphosphate + [thioredoxin]-disulfide + H2O = a ribonucleoside 5'-diphosphate + [thioredoxin]-dithiol. Provides the precursors necessary for DNA synthesis. Catalyzes the biosynthesis of deoxyribonucleotides from the corresponding ribonucleotides. This is Ribonucleoside-diphosphate reductase subunit beta (nrdF) from Mycobacterium leprae (strain TN).